The primary structure comprises 1675 residues: QGNYYSYGGTTPGTPIGCTNLITLSNVKFFASSSSDGPDIPVLNSTDYWCSEFNWKNQSLTVDLGFVTFFDRLLVQGEPFTSRSVSEYFVLTSIDGINYTYILGTNGQSMKFVGPLFNGDQTRDTNLTAPVQARYVQFNPQEPMIAEDDSICMRVGVESCQLVPAAVNGAWSHWSPYGPCTHACLGTAKRTRTCADPAPVFGGSPCEGVNEEEKICNDCVGTVNGGWSPWGLWSRCSTTCNPGQRSRQRTCTNPSPKNGGTDCSGPSTQSEPCQVQFCPVDGGWSAWSGLSRCTRACGGGRQYQSRTCSNPFPGHGGRDCVGVRSLSFTCNTQCCPVHGGWSPWGSFSSCTRTCGGGQKSRTRVCNSPAPSCNGITCPGGNQDIQPCNQQTCPTSPSTSFPINGNYSNWGQWTACSVTCGQGTRERTRLCDNPAPAQGGSQCQGPSSELVGCTEIPCPVNGNWSSWGDWSNCSSGCGPGKSYRYRDCDNPAPANNGLNCTGPDQESKDCNSTACPVDGGWSAWSSTPCSATCGQGTLKRTRECNNPKPQYGGASCFGNETEQEVACNKGPCPTSPPTISPPTTGSPADSNIPELDLVFAVSATSSNRLATYNSMRDTINRFITTYGSNKVHYSIIVYGKAVQRVISFNHTFPPSVGELQEAISRHAPISGPTVLKNALQETQTIFQEIPSRPNAKKVLVVFTDSNSPSDGNLVQAVRPLENNKILVVSVGVGDVNRTELLTISPNPLDVLSVQPTAGPGALSKRIMDRILRRDIPLIDIGFALSATSSDFQDIFVKMKNVIRTIVERYGVERVKFSLIVYGQNVTTVLGDFNRNLTQADLVNYVNNLQRVPQNKNLDSALLEAESLFRQRARPNSKKVFVVLTDGVSTLSNANSLLINTAELRKSDVLILSVGFGSQTNQVGNQMNSVVFAPRDYIAVPNYPAERDVVIAETIMFKALEVNLPLIDLTFALSSSSILSQETFKLMKETVQSLVHTYGIDRIHYGVIVFGSVATRSFDFATNFPDQNELIRKVSQLTRSGGSPDLVAALKEARKVFQLKEVRPYARKVLVVMIDDESSANKNDLNEEVRALRNRSVLVIGVGIGTQTLPKDLGIITDDKRNTLKAGINKNRDELAREIISIILRPSGLSKWSSWSACSKTCRYLGKAGTQIRTRDCKIPELGCDGMRIDTVECNKMDCEGCGQRGPLNESAYTASSNSESPAFLAALNTSDPTAWCLINNENGGYVQLDLGELTRVYKVATKGEQQGDRWVTSYYLTLSEDGETFFDYKAAQRLSGNTDSTSVAFNVVNTTRPYRYVRFHPVNFKGEPCMQAAVFGCNEEKILPPPETIADQADAAKGILIVLWILAGILTFLLLMACCYYCCWHVCCGRGKKRKGLVYRERSIEDDGYLINDEKRWTLGSAPMTPVPRVREDEIQEVTIEMKEDNEQPLGVIQFGIETDETKEKHVTAEDVKSEKPKYSEEASSGTIKSGSTMMRMKANDGSDRRKRTKSEGDAIDAVDGDLDWSYLSDEQGTAFTNEAFVKSQEQFLEPPGSASFRGNKVDMRRSLSADELATLDYDLFEDRQGPLHTATLGRDGYMRMHKANQGSLPPSDGGREMGTVDVAIGGIRVPNSPKDDPIYDTAGQEIHLAVEQAGRSVYPLEDGGYRGEEWYSRWG.

The Extracellular portion of the chain corresponds to 1 to 1356 (QGNYYSYGGT…TIADQADAAK (1356 aa)). In terms of domain architecture, F5/8 type C 1 spans 11–160 (TPGTPIGCTN…ICMRVGVESC (150 aa)). TSP type-1 domains follow at residues 168 to 220 (NGAW…NDCV), 224 to 279 (NGGW…QFCP), 281 to 336 (DGGW…QCCP), 338 to 393 (HGGW…QTCP), 403 to 458 (NGNY…IPCP), 460 to 515 (NGNW…TACP), and 517 to 572 (DGGW…GPCP). Cystine bridges form between Cys-180–Cys-216, Cys-184–Cys-219, Cys-194–Cys-206, Cys-236–Cys-273, Cys-240–Cys-278, Cys-251–Cys-263, Cys-293–Cys-330, Cys-297–Cys-335, Cys-308–Cys-320, Cys-350–Cys-387, Cys-354–Cys-392, Cys-365–Cys-377, Cys-415–Cys-452, Cys-419–Cys-457, Cys-430–Cys-442, Cys-472–Cys-509, Cys-476–Cys-514, Cys-487–Cys-499, Cys-528–Cys-566, Cys-532–Cys-571, and Cys-543–Cys-555. A disordered region spans residues 567-588 (NKGPCPTSPPTISPPTTGSPAD). VWFA domains lie at 595-769 (DLVF…MDRI), 778-958 (DIGF…FKAL), and 966-1141 (DLTF…ISII). The region spanning 1144–1198 (PSGLSKWSSWSACSKTCRYLGKAGTQIRTRDCKIPELGCDGMRIDTVECNKMDCE) is the TSP type-1 8 domain. Cystine bridges form between Cys-1156–Cys-1192, Cys-1160–Cys-1197, and Cys-1175–Cys-1182. The 145-residue stretch at 1192-1336 (CNKMDCEGCG…PCMQAAVFGC (145 aa)) folds into the F5/8 type C 2 domain. Residues 1357-1377 (GILIVLWILAGILTFLLLMAC) traverse the membrane as a helical segment. Over 1378 to 1675 (CYYCCWHVCC…RGEEWYSRWG (298 aa)) the chain is Cytoplasmic. The span at 1463–1480 (EKHVTAEDVKSEKPKYSE) shows a compositional bias: basic and acidic residues. The tract at residues 1463–1491 (EKHVTAEDVKSEKPKYSEEASSGTIKSGS) is disordered. Polar residues predominate over residues 1481-1491 (EASSGTIKSGS).

In terms of tissue distribution, component of the acid-insoluble and acid-soluble organic matrix of the aragonitic skeleton (at protein level).

The protein resides in the membrane. In Acropora millepora (Staghorn coral), this protein is Coadhesin.